The primary structure comprises 288 residues: Thymidylate synthase (288 aa).

Arg-21 serves as a coordination point for dUMP. Asn-51 serves as a coordination point for (6R)-5,10-methylene-5,6,7,8-tetrahydrofolate. 150–151 (RR) is a binding site for dUMP. The active-site Nucleophile is the Cys-170. DUMP-binding positions include 190-193 (RSGD), Asn-201, and 231-233 (HIY). Asp-193 is a binding site for (6R)-5,10-methylene-5,6,7,8-tetrahydrofolate. Ala-287 is a (6R)-5,10-methylene-5,6,7,8-tetrahydrofolate binding site.

This sequence belongs to the thymidylate synthase family. Bacterial-type ThyA subfamily. Homodimer.

The protein localises to the cytoplasm. It catalyses the reaction dUMP + (6R)-5,10-methylene-5,6,7,8-tetrahydrofolate = 7,8-dihydrofolate + dTMP. Its pathway is pyrimidine metabolism; dTTP biosynthesis. In terms of biological role, catalyzes the reductive methylation of 2'-deoxyuridine-5'-monophosphate (dUMP) to 2'-deoxythymidine-5'-monophosphate (dTMP) while utilizing 5,10-methylenetetrahydrofolate (mTHF) as the methyl donor and reductant in the reaction, yielding dihydrofolate (DHF) as a by-product. This enzymatic reaction provides an intracellular de novo source of dTMP, an essential precursor for DNA biosynthesis. This Phytoplasma mali (strain AT) protein is Thymidylate synthase.